Here is a 591-residue protein sequence, read N- to C-terminus: Monoterpene synthase 8, chloroplastic (591 aa).

A chloroplast-targeting transit peptide spans 1-46 (MSLLLAPPSYFPFRGLRRSTAAKQPPCLRLVKCTADRQSPEAARRS). Mg(2+) contacts are provided by aspartate 346, aspartate 350, and glutamate 497. The DDXXD motif signature appears at 346–350 (DDVYD).

The protein belongs to the terpene synthase family. Tpsa subfamily. It depends on Mg(2+) as a cofactor. Requires Mn(2+) as cofactor. As to expression, highly expressed in flowers, petals and sepals, but almost undetectable in vegetative organs.

It is found in the plastid. Its subcellular location is the chloroplast. It catalyses the reaction (2E)-geranyl diphosphate + H2O = (R)-linalool + diphosphate. The catalysed reaction is (2E)-geranyl diphosphate + H2O = (S)-linalool + diphosphate. It carries out the reaction (2E,6E)-farnesyl diphosphate = (S)-beta-bisabolene + diphosphate. The enzyme catalyses (2E,6E)-farnesyl diphosphate = (E,R)-alpha-bisabolene + diphosphate. It catalyses the reaction (2E,6E)-farnesyl diphosphate = (E)-beta-farnesene + diphosphate. The catalysed reaction is (2E,6E)-farnesyl diphosphate = beta-sesquiphellandrene + diphosphate. It carries out the reaction (2E,6E)-farnesyl diphosphate = (1S,5S,6R)-alpha-bergamotene + diphosphate. The protein operates within secondary metabolite biosynthesis; terpenoid biosynthesis. Functionally, sesquiterpene and monoterpene synthase involved in the biosynthesis of volatile compounds present in floral scent. Mediates the conversion of (2E)-geranyl diphosphate (GPP) into linalool, with trace levels of myrcene, limonene and (Z)-beta-ocimene. Also acts as a sesquiterpene synthase by catalyzing the conversion of farnesyl diphosphate (FPP) to alpha-bergamotene and beta-bisabolene and to minor products including alpha-curcumene, cis-alpha-bisabolene, beta-farnesene and beta-sesquiphellandrene, as well as seven other unidentified sesquiterpenes. The chain is Monoterpene synthase 8, chloroplastic from Hedychium coronarium (White butterfly ginger-lily).